The primary structure comprises 357 residues: 3'(2'),5'-bisphosphate nucleotidase (357 aa).

Asp49 serves as the catalytic Proton acceptor. Residues Glu72, Asp142, Ile144, and Asp145 each contribute to the Mg(2+) site. The Proton acceptor role is filled by Thr147. Adenosine 3',5'-bisphosphate-binding residues include Thr147, His241, Ser264, Lys267, Arg281, and Asp294. Residues His241, Ser264, Lys267, Arg281, and Asp294 each contribute to the AMP site. Asp294 contributes to the Mg(2+) binding site.

Belongs to the inositol monophosphatase superfamily. The cofactor is Mg(2+).

It localises to the cytoplasm. The protein resides in the nucleus. It carries out the reaction 3'-phosphoadenylyl sulfate + H2O = adenosine 5'-phosphosulfate + phosphate. The catalysed reaction is adenosine 3',5'-bisphosphate + H2O = AMP + phosphate. It catalyses the reaction adenosine 2',5'-bisphosphate + H2O = AMP + phosphate. With respect to regulation, phosphatase activity is very sensitive to lithium and moderately sensitive to sodium. The inhibitory effects of lithium and sodium are overcome by high concentrations of potassium. Lithium exerts its inhibitory action by blocking the products of the PAP hydrolysis at the active site. Its function is as follows. Phosphatase that converts adenosine 3'-phosphate 5'-phosphosulfate (PAPS) to adenosine 5'-phosphosulfate (APS) and 3'(2')-phosphoadenosine 5'-phosphate (PAP) to AMP. May regulate the flux of sulfur in the sulfur-activation pathway by converting PAPS to APS. Involved in salt tolerance. Confers resistance to lithium. Shows no activity on inositol mono- and diphosphates, 3'-AMP, AMP, nicotinamide adenine dinucleotide phosphate (NADP), and p-nitrophenylphosphate. The protein is 3'(2'),5'-bisphosphate nucleotidase (MET22) of Saccharomyces cerevisiae (strain ATCC 204508 / S288c) (Baker's yeast).